A 295-amino-acid chain; its full sequence is Protease HtpX (295 aa).

A run of 2 helical transmembrane segments spans residues 4-24 (ILLFLATNLAVVLIASITLSL) and 42-62 (QLLVFCAVFGFAGSLFSLFIS). His-147 is a binding site for Zn(2+). Residue Glu-148 is part of the active site. Residue His-151 participates in Zn(2+) binding. The next 2 membrane-spanning stretches (helical) occupy residues 158–178 (VTLALVQGVVNTFVMFFARII) and 199–219 (ITTIFAELVLGFLASAIVMWF). Position 224 (Glu-224) interacts with Zn(2+).

The protein belongs to the peptidase M48B family. Zn(2+) is required as a cofactor.

It is found in the cell inner membrane. This Pseudomonas syringae pv. syringae (strain B728a) protein is Protease HtpX.